Consider the following 736-residue polypeptide: Orphan sodium- and chloride-dependent neurotransmitter transporter NTT5 (736 aa).

At 1-138 the chain is on the cytoplasmic side; the sequence is MKTEAQPSTS…FAYLWLNSGG (138 aa). 3 helical membrane passes run 139 to 159, 177 to 197, and 199 to 219; these read CSFA…LLFL, IIAP…FILG, and YFNV…QFPV. Residues 220–263 lie on the Extracellular side of the membrane; sequence PWEKCPLTMNSSGFDPECERTTPSIYFWYQQALKASDRIEDGGS. Asn229 carries N-linked (GlcNAc...) asparagine glycosylation. The next 4 helical transmembrane spans lie at 264 to 284, 290 to 310, 338 to 358, and 383 to 403; these read PVYS…AFMI, TGKV…GFFI, VWSL…GSVA, and LTLL…ATVI. Residues 404–495 are Extracellular-facing; sequence THRCCERNAE…EAMSFLPPSV (92 aa). Transmembrane regions (helical) follow at residues 496–516, 534–554, 568–588, 609–629, and 659–679; these read FWSF…AIGI, HTKL…LFFT, YWIV…VSWA, IFGW…FVTM, and ALLL…AYFV. The Cytoplasmic segment spans residues 680-736; it reads YCRIHRIPFRPKSGDGPMTASTSLPLSHQLTPSKEVQKEEILQVDETKYPSTCNVTS.

The protein belongs to the sodium:neurotransmitter symporter (SNF) (TC 2.A.22) family. SLC6A16 subfamily. Highly expressed in peripheral tissues, particularly in testis, pancreas, and prostate.

The protein localises to the membrane. The sequence is that of Orphan sodium- and chloride-dependent neurotransmitter transporter NTT5 (SLC6A16) from Homo sapiens (Human).